The primary structure comprises 320 residues: Protein rlx (320 aa).

In terms of biological role, this protein is probably required for relaxation complex formation and plasmid mobilization by conjugative plasmids. The sequence is that of Protein rlx (rlx) from Staphylococcus aureus.